The sequence spans 63 residues: Anionic peptide 10.1 (63 aa).

The first 20 residues, 1–20, serve as a signal peptide directing secretion; that stretch reads MISRFCLLFLLVFVVSKIQA.

This sequence belongs to the non-disulfide-bridged peptide (NDBP) superfamily. Long chain multifunctional peptide (group 2) family. Expressed by the venom gland.

It localises to the secreted. The sequence is that of Anionic peptide 10.1 from Lychas mucronatus (Chinese swimming scorpion).